Reading from the N-terminus, the 160-residue chain is Ribosomal RNA large subunit methyltransferase H (160 aa).

Residues L76 and G108 each contribute to the S-adenosyl-L-methionine site.

It belongs to the RNA methyltransferase RlmH family. Homodimer.

It localises to the cytoplasm. It catalyses the reaction pseudouridine(1915) in 23S rRNA + S-adenosyl-L-methionine = N(3)-methylpseudouridine(1915) in 23S rRNA + S-adenosyl-L-homocysteine + H(+). Functionally, specifically methylates the pseudouridine at position 1915 (m3Psi1915) in 23S rRNA. This Rhodopseudomonas palustris (strain BisB5) protein is Ribosomal RNA large subunit methyltransferase H.